The following is a 634-amino-acid chain: Chaperone protein DnaK (634 aa).

Threonine 198 bears the Phosphothreonine; by autocatalysis mark. Residues 599-634 (KQTQEGAEAASEAGEQSAGDEGVVDAEFEEVDEQNK) are disordered. Residues 602–619 (QEGAEAASEAGEQSAGDE) are compositionally biased toward low complexity. Residues 620 to 634 (GVVDAEFEEVDEQNK) are compositionally biased toward acidic residues.

This sequence belongs to the heat shock protein 70 family.

Acts as a chaperone. This chain is Chaperone protein DnaK, found in Syntrophotalea carbinolica (strain DSM 2380 / NBRC 103641 / GraBd1) (Pelobacter carbinolicus).